Reading from the N-terminus, the 241-residue chain is ATP synthase subunit a (241 aa).

Transmembrane regions (helical) follow at residues 30-50 (GQVF…VVVG), 91-111 (FIGT…LVPW), 128-148 (INTT…AGLS), 193-213 (LVVA…VMFL), and 214-234 (GLFT…YYIG).

The protein belongs to the ATPase A chain family. F-type ATPases have 2 components, CF(1) - the catalytic core - and CF(0) - the membrane proton channel. CF(1) has five subunits: alpha(3), beta(3), gamma(1), delta(1), epsilon(1). CF(0) has four main subunits: a, b, b' and c.

It localises to the cellular thylakoid membrane. In terms of biological role, key component of the proton channel; it plays a direct role in the translocation of protons across the membrane. This Prochlorococcus marinus (strain MIT 9303) protein is ATP synthase subunit a.